The sequence spans 274 residues: Bis(5'-nucleosyl)-tetraphosphatase, symmetrical (274 aa).

It belongs to the Ap4A hydrolase family.

It carries out the reaction P(1),P(4)-bis(5'-adenosyl) tetraphosphate + H2O = 2 ADP + 2 H(+). Functionally, hydrolyzes diadenosine 5',5'''-P1,P4-tetraphosphate to yield ADP. This chain is Bis(5'-nucleosyl)-tetraphosphatase, symmetrical, found in Shewanella loihica (strain ATCC BAA-1088 / PV-4).